Here is a 962-residue protein sequence, read N- to C-terminus: Splicing regulator ARVCF (962 aa).

Residues 8 to 46 adopt a coiled-coil conformation; that stretch reads SAASILASVKEQEARFERLTRALEQERRHVALQLERAQQ. Positions 95 to 122 are disordered; it reads TVEEDPGTPTSHVSIVTSEDGTTRRTET. Residues threonine 102 and threonine 104 each carry the phosphothreonine modification. Polar residues predominate over residues 102–114; that stretch reads TPTSHVSIVTSED. Arginine 170 carries the omega-N-methylarginine modification. Disordered regions lie at residues 186 to 253 and 266 to 290; these read GGGF…LPER and RSLA…RRRP. Over residues 206–217 the composition is skewed to low complexity; it reads RGLGMRPPRAGP. Serine 267 is modified (phosphoserine). Acidic residues predominate over residues 270–280; sequence ADDEGGPELEP. A phosphoserine mark is found at serine 332, serine 335, serine 343, and serine 345. ARM repeat units follow at residues 348–387, 390–429, 433–467, 468–508, 526–565, and 575–622; these read SARK…HLCF, EGVK…NLSY, TDNK…VTGT, LWNL…NEDS, LRNV…DTDN, and MRNL…GKKA. Residues 590 to 614 form a disordered region; that stretch reads DRYQEAEPGPLGSAVGSQRRRRDDA. At serine 606 the chain carries Phosphoserine. The short motif at 607-623 is the Nuclear localization signal element; the sequence is QRRRRDDASCFGGKKAK. Position 642 is a phosphothreonine (threonine 642). ARM repeat units follow at residues 646-686, 699-738, 739-781, and 782-826; these read PKRT…AAGA, TYIR…NLSL, DRRN…AVLN, and TIHE…SHVL. The segment at 776 to 962 is required for interaction with RNA-binding proteins DDX5, HNRNPH2 and SRSF1 and with mRNAs; it reads VVAVLNTIHE…AKPQPVDSWV (187 aa). The segment at 854–962 is disordered; sequence ATAKGPKGAL…AKPQPVDSWV (109 aa). A phosphoserine mark is found at serine 864 and serine 871. Residue threonine 872 is modified to Phosphothreonine. Residues 878–887 show a composition bias toward basic and acidic residues; that stretch reads KSLEGEKTGS. Serine 915 is modified (phosphoserine). A compositionally biased stretch (basic and acidic residues) spans 920-932; sequence ASEKEPLKLDPSR.

The protein belongs to the beta-catenin family. As to quaternary structure, component of a ribonucleoprotein complex containing mRNAs and RNA-binding proteins including DDX5, HNRNPH2 and SRSF1 as well as ARVCF. Interacts (via the extreme C-terminus) with FRMPD2 (via the PDZ 2 domain). Interacts with CCDC85B. Found in all the examined tissues including heart, brain, liver and kidney. Found at low level in lung. Expressed in dermal connective tissue, salivary gland duct and in the corneal layer (at protein level). Expressed in arrector pili muscle (at protein level). High levels detected in epithelial cells with lower levels found in fibroblasts and T lymphocytes.

It is found in the cell junction. Its subcellular location is the adherens junction. The protein localises to the nucleus. It localises to the cytoplasm. Its function is as follows. Contributes to the regulation of alternative splicing of pre-mRNAs. The chain is Splicing regulator ARVCF from Homo sapiens (Human).